A 159-amino-acid polypeptide reads, in one-letter code: Transcriptional repressor NrdR (159 aa).

Over residues Met1 to Ser11 the composition is skewed to polar residues. The interval Met1–Ser21 is disordered. Residues Cys3–Cys34 fold into a zinc finger. The 91-residue stretch at Val49–Asp139 folds into the ATP-cone domain.

The protein belongs to the NrdR family. Zn(2+) is required as a cofactor.

Negatively regulates transcription of bacterial ribonucleotide reductase nrd genes and operons by binding to NrdR-boxes. This Prochlorococcus marinus (strain AS9601) protein is Transcriptional repressor NrdR.